We begin with the raw amino-acid sequence, 352 residues long: MANIDKDKLKAIEMAMGQIEKQFGKGSVMKLGEQGAPQMDAVSTGCLDLDIALGIGGVPKGRIIEIYGPESSGKTTVALHVVAEAQKLGGAAAYIDAEHALDPVYAKRLGVNIDDLVVSQPDTGEQALEITEALVRSGAIDVLVVDSVAALVPRAEIEGEMGDSHVGLQARLMSQALRKLTGTINKSNCVVIFINQLREKVGIMFGNPETTPGGRALKFYASVRMDIRRIDSIKQGDGITGNRTRVKIVKNKVAPPFKQAEFDIMYNEGISKEGNIVDVGVKENIVQKSGAWFSYGDIRLGQGRENAKQYLKENPSVALDIENQIREKYSLPLAKAVESTSVEKNTEESVES.

ATP is bound at residue 68–75 (GPESSGKT).

Belongs to the RecA family.

It is found in the cytoplasm. In terms of biological role, can catalyze the hydrolysis of ATP in the presence of single-stranded DNA, the ATP-dependent uptake of single-stranded DNA by duplex DNA, and the ATP-dependent hybridization of homologous single-stranded DNAs. It interacts with LexA causing its activation and leading to its autocatalytic cleavage. The sequence is that of Protein RecA from Clostridium perfringens (strain SM101 / Type A).